Reading from the N-terminus, the 121-residue chain is Large ribosomal subunit protein uL14 (121 aa).

It belongs to the universal ribosomal protein uL14 family. Part of the 50S ribosomal subunit. Forms a cluster with proteins L3 and L19. In the 70S ribosome, L14 and L19 interact and together make contacts with the 16S rRNA in bridges B5 and B8.

Binds to 23S rRNA. Forms part of two intersubunit bridges in the 70S ribosome. The chain is Large ribosomal subunit protein uL14 from Aquifex pyrophilus.